Reading from the N-terminus, the 332-residue chain is 2,3-diketo-L-gulonate reductase (332 aa).

His-44 serves as the catalytic Proton donor. NAD(+)-binding positions include 168–174 (ITMVDMS), 224–225 (WK), and 304–306 (GHE).

This sequence belongs to the LDH2/MDH2 oxidoreductase family. DlgD subfamily. In terms of assembly, homodimer.

It is found in the cytoplasm. The catalysed reaction is 3-dehydro-L-gulonate + NAD(+) = 2,3-dioxo-L-gulonate + NADH + H(+). The enzyme catalyses 3-dehydro-L-gulonate + NADP(+) = 2,3-dioxo-L-gulonate + NADPH + H(+). In terms of biological role, catalyzes the reduction of 2,3-diketo-L-gulonate in the presence of NADH, to form 3-keto-L-gulonate. The sequence is that of 2,3-diketo-L-gulonate reductase from Salmonella paratyphi C (strain RKS4594).